Here is a 38-residue protein sequence, read N- to C-terminus: Beta-defensin 1 (38 aa).

Disulfide bonds link Cys5–Cys34, Cys12–Cys27, and Cys17–Cys35.

It belongs to the beta-defensin family. As to quaternary structure, monomer. Homodimer. As to expression, neutrophilic granules.

It localises to the secreted. The protein localises to the membrane. Has bactericidal activity. Active against E.coli ML35 but not against S.aureus 502A. May act as a ligand for C-C chemokine receptor CCR6. Positively regulates the sperm motility and bactericidal activity in a CCR6-dependent manner. Binds to CCR6 and triggers Ca2+ mobilization in the sperm which is important for its motility. The polypeptide is Beta-defensin 1 (DEFB1) (Bos taurus (Bovine)).